We begin with the raw amino-acid sequence, 191 residues long: Small ribosomal subunit protein eS7 (191 aa).

M1 bears the N-acetylmethionine mark.

The protein belongs to the eukaryotic ribosomal protein eS7 family.

This is Small ribosomal subunit protein eS7 (RPS7) from Brassica oleracea (Wild cabbage).